Here is a 64-residue protein sequence, read N- to C-terminus: Large ribosomal subunit protein bL35 (64 aa).

The tract at residues 1–64 (MPKNKTNSGA…RKSIKKLLGK (64 aa)) is disordered.

The protein belongs to the bacterial ribosomal protein bL35 family.

This Beutenbergia cavernae (strain ATCC BAA-8 / DSM 12333 / CCUG 43141 / JCM 11478 / NBRC 16432 / NCIMB 13614 / HKI 0122) protein is Large ribosomal subunit protein bL35.